The chain runs to 485 residues: Transcription factor E2FA (485 aa).

Residues 1–11 (MSGVVRSSPGS) show a composition bias toward low complexity. Disordered stretches follow at residues 1 to 69 (MSGV…SNNN) and 114 to 159 (SGFT…SPIT). Pro residues predominate over residues 12–26 (SQPPPPPPHHPPSSP). Over residues 114–125 (SGFTNIPSSPCQ) the composition is skewed to polar residues. Over residues 129–141 (KGGRVNIKSKAKG) the composition is skewed to basic residues. Positions 142 to 159 (NKSTPQTPISTNAGSPIT) are enriched in polar residues. The DNA-binding element occupies 167–232 (RYDSSLGLLT…PFKNRILWKG (66 aa)). A coiled-coil region spans residues 245 to 286 (SVLQLQAEIENLALEEQALDNQIRQTEERLRDLSENEKNQKW). The tract at residues 249-277 (LQAEIENLALEEQALDNQIRQTEERLRDL) is leucine-zipper. A retinoblastoma protein binding region spans residues 435–450 (DYWLLSNAEISMTDIW).

Belongs to the E2F/DP family. In terms of assembly, heterodimer with DP proteins. Interacts (via dimerization domain) preferentially with DPA, but also with DPB. Interacts with maize retinoblastoma-related protein RBR1. No interaction with E2FD. As to expression, highly expressed in the shoot apical meristem, emerging leaf primordia, and vascular tissues of young leaf primordia. Expressed in flowers, in epidermis and cortex of hypocotyls, and at lower levels in leaves.

Its subcellular location is the cytoplasm. It is found in the nucleus. Its function is as follows. Transcription activator that binds DNA cooperatively with DP proteins through the E2 recognition site, 5'-TTTC[CG]CGC-3' found in the promoter region of a number of genes whose products are involved in cell cycle regulation or in DNA replication. The binding of retinoblastoma-related proteins represses transactivation. Regulates gene expression both positively and negatively. Activates the expression of E2FB. Involved in the control of cell-cycle progression from G1 to S phase. Stimulates cell proliferation and delays differentiation. The polypeptide is Transcription factor E2FA (E2FA) (Arabidopsis thaliana (Mouse-ear cress)).